Reading from the N-terminus, the 423-residue chain is F-box/LRR-repeat protein 2 (423 aa).

Residues 9–55 (GRINKKLPKELLLRIFSFLDIVTLCRCAQISKAWNILALDGSNWQRI) enclose the F-box domain. LRR repeat units follow at residues 61 to 87 (QTDV…SLRG), 88 to 113 (CIGV…NLNG), 114 to 139 (CTKI…DLTS), 140 to 165 (CVSI…NLSW), 166 to 191 (CDQI…LLRG), 192 to 217 (CTQL…NLQS), 218 to 243 (CSRI…CLSG), 244 to 269 (CSNL…EAAR), 270 to 295 (CSHL…DLEE), 296 to 321 (CILI…SLSH), 322 to 350 (CELI…ELDN), 351 to 375 (CLLI…ELYD), and 376 to 401 (CQQV…AYFA). Positions 80 to 90 (LRKLSLRGCIG) are interaction with Calmodulin. Lysine 201 participates in a covalent cross-link: Glycyl lysine isopeptide (Lys-Gly) (interchain with G-Cter in ubiquitin). At threonine 404 the chain carries Phosphothreonine. Cysteine 420 is lipidated: S-geranylgeranyl cysteine. The short motif at 420 to 423 (CVIL) is the CAAX motif element.

Part of the SCF (SKP1-CUL1-F-box) E3 ubiquitin-protein ligase complex SCF(FBXL2) composed of CUL1, SKP1, RBX1 and FBXL2. Interacts with calmodulin; may antagonize substrate ubiquitination by SCF(FBXL2). May interact with PIK3R1. Interacts with PTPN13. Post-translationally, phosphorylated by GSK-beta (GSK3B), promoting recognition by FBXO3, leading to its ubiquitination by the SCF(FBXO3) complex. In terms of processing, ubiquitinated at Lys-201 by the SCF(FBXO3) complex in response to lipopolysaccharide (LPS), leading to its degradation by the proteasome.

It localises to the membrane. The protein operates within protein modification; protein ubiquitination. In terms of biological role, calcium-activated substrate recognition component of the SCF (SKP1-cullin-F-box protein) E3 ubiquitin-protein ligase complex, SCF(FBXL2), which mediates the ubiquitination and subsequent proteasomal degradation of target proteins. Unlike many F-box proteins, FBXL2 does not seem to target phosphodegron within its substrates but rather calmodulin-binding motifs and is thereby antagonized by calmodulin. This is the case for the cyclins CCND2 and CCND3 which polyubiquitination and subsequent degradation are inhibited by calmodulin. Through CCND2 and CCND3 degradation induces cell-cycle arrest in G(0). SCF(FBXL2) also mediates PIK3R2 ubiquitination and proteasomal degradation thereby regulating phosphatidylinositol 3-kinase signaling and autophagy. PCYT1A monoubiquitination by SCF(FBXL2) and subsequent degradation regulates synthesis of phosphatidylcholine, which is utilized for formation of membranes and of pulmonary surfactant. The SCF(FBXL2) complex acts as a regulator of inflammation by mediating ubiquitination and degradation of TRAF proteins (TRAF1, TRAF2, TRAF3, TRAF4, TRAF5 and TRAF6). The SCF(FBXL2) complex acts as a negative regulator of the NLRP3 inflammasome by mediating ubiquitination and degradation of NLRP3. The polypeptide is F-box/LRR-repeat protein 2 (Pongo abelii (Sumatran orangutan)).